Here is a 93-residue protein sequence, read N- to C-terminus: Acylphosphatase (93 aa).

Residues 5–93 (CIIAWVHGRV…EELTGFRIRY (89 aa)) enclose the Acylphosphatase-like domain. Catalysis depends on residues arginine 20 and asparagine 38.

The protein belongs to the acylphosphatase family.

It catalyses the reaction an acyl phosphate + H2O = a carboxylate + phosphate + H(+). The protein is Acylphosphatase (acyP) of Citrobacter koseri (strain ATCC BAA-895 / CDC 4225-83 / SGSC4696).